The following is a 449-amino-acid chain: Biotin carboxylase (449 aa).

Positions 4 to 448 constitute a Biotin carboxylation domain; that stretch reads MIEKVLIANR…NIHYLEKMLG (445 aa). ATP contacts are provided by residues Lys119, Lys162, 168-169, 204-207, His212, and His239; these read GG and EKYL. One can recognise an ATP-grasp domain in the interval 123–320; the sequence is IAAMKAAGVP…IVKEQILIAA (198 aa). Lys241 contributes to the hydrogencarbonate binding site. Residues Glu279 and Glu291 each coordinate ATP. Mg(2+) contacts are provided by Glu279, Glu291, and Asn293. Mn(2+) is bound by residues Glu279, Glu291, and Asn293. Hydrogencarbonate is bound by residues Arg295, Val298, and Arg341. The active site involves Arg295. Residue Arg341 participates in biotin binding.

Acetyl-CoA carboxylase is a heterohexamer of biotin carboxyl carrier protein, biotin carboxylase and the two subunits of carboxyl transferase in a 2:2 complex. Mg(2+) serves as cofactor. Requires Mn(2+) as cofactor.

It catalyses the reaction N(6)-biotinyl-L-lysyl-[protein] + hydrogencarbonate + ATP = N(6)-carboxybiotinyl-L-lysyl-[protein] + ADP + phosphate + H(+). The protein operates within lipid metabolism; malonyl-CoA biosynthesis; malonyl-CoA from acetyl-CoA: step 1/1. Its function is as follows. This protein is a component of the acetyl coenzyme A carboxylase complex; first, biotin carboxylase catalyzes the carboxylation of the carrier protein and then the transcarboxylase transfers the carboxyl group to form malonyl-CoA. This Allochromatium vinosum (strain ATCC 17899 / DSM 180 / NBRC 103801 / NCIMB 10441 / D) (Chromatium vinosum) protein is Biotin carboxylase (accC).